The sequence spans 178 residues: NAD(P)H-quinone oxidoreductase subunit 6, chloroplastic (178 aa).

Transmembrane regions (helical) follow at residues 10–30 (LIVAYLIQLGIYIGALAVIFF), 33–53 (IVYAAISLALVLSLIALLYLF), 64–84 (ILIYVGAINVLILFAIMLISL), 100–120 (ISAFACISLFVLLVKIILQTP), and 148–168 (LLPFELISLLLLIALIGAVSI).

This sequence belongs to the complex I subunit 6 family. As to quaternary structure, NDH is composed of at least 16 different subunits, 5 of which are encoded in the nucleus.

It is found in the plastid. The protein localises to the chloroplast thylakoid membrane. The enzyme catalyses a plastoquinone + NADH + (n+1) H(+)(in) = a plastoquinol + NAD(+) + n H(+)(out). It carries out the reaction a plastoquinone + NADPH + (n+1) H(+)(in) = a plastoquinol + NADP(+) + n H(+)(out). In terms of biological role, NDH shuttles electrons from NAD(P)H:plastoquinone, via FMN and iron-sulfur (Fe-S) centers, to quinones in the photosynthetic chain and possibly in a chloroplast respiratory chain. The immediate electron acceptor for the enzyme in this species is believed to be plastoquinone. Couples the redox reaction to proton translocation, and thus conserves the redox energy in a proton gradient. This Chara vulgaris (Common stonewort) protein is NAD(P)H-quinone oxidoreductase subunit 6, chloroplastic (ndhG).